The primary structure comprises 276 residues: Probable endonuclease 4 (276 aa).

Residues H65, H105, E141, D175, H178, H210, D223, H225, and E255 each contribute to the Zn(2+) site.

This sequence belongs to the AP endonuclease 2 family. Zn(2+) is required as a cofactor.

It carries out the reaction Endonucleolytic cleavage to 5'-phosphooligonucleotide end-products.. Functionally, endonuclease IV plays a role in DNA repair. It cleaves phosphodiester bonds at apurinic or apyrimidinic (AP) sites, generating a 3'-hydroxyl group and a 5'-terminal sugar phosphate. The protein is Probable endonuclease 4 of Symbiobacterium thermophilum (strain DSM 24528 / JCM 14929 / IAM 14863 / T).